Here is a 153-residue protein sequence, read N- to C-terminus: Virion assembly protein OPG100 (153 aa).

This sequence belongs to the orthopoxvirus OPG100 family. In terms of assembly, homodimer. Part of a complex composed of the kinase OPG054, OPG092, OPG114, OPG115, OPG142 and OPG157. Interacts with OPG175.

It localises to the virion. The protein localises to the host cytoplasm. Its function is as follows. Late protein which is a part of a large complex required for early virion morphogenesis. This complex participates in the formation of virosomes and the incorporation of virosomal contents into nascent immature virions. Plays a role in DNA packaging during immature virions (IV) formation. The protein is Virion assembly protein OPG100 (OPG100) of Vaccinia virus (strain Western Reserve) (VACV).